Here is a 479-residue protein sequence, read N- to C-terminus: Ribosomal RNA small subunit methyltransferase F (479 aa).

S-adenosyl-L-methionine-binding positions include 125–131 (AAAPGSK), Glu-149, Gly-177, and Asp-194. Cys-247 functions as the Nucleophile in the catalytic mechanism.

This sequence belongs to the class I-like SAM-binding methyltransferase superfamily. RsmB/NOP family.

Its subcellular location is the cytoplasm. The catalysed reaction is cytidine(1407) in 16S rRNA + S-adenosyl-L-methionine = 5-methylcytidine(1407) in 16S rRNA + S-adenosyl-L-homocysteine + H(+). Its function is as follows. Specifically methylates the cytosine at position 1407 (m5C1407) of 16S rRNA. This is Ribosomal RNA small subunit methyltransferase F from Shigella flexneri serotype 5b (strain 8401).